Here is a 139-residue protein sequence, read N- to C-terminus: MKKGTVLNSDISSVISRLGHTDTLVVCDAGLPIPKSTTRIDMALTQGVPSFMQVLGVVTNEMQVEAAIIAEEIKQHNPQLHETLLTHLEQLQKHQGNTIEIRYTTHEQFKQQTAESQAVIRSGECSPYANIILCAGVTF.

Catalysis depends on histidine 20, which acts as the Proton donor. Residues aspartate 28, histidine 106, and 128–130 (YAN) contribute to the substrate site.

This sequence belongs to the RbsD / FucU family. RbsD subfamily. Homodecamer.

The protein localises to the cytoplasm. The enzyme catalyses beta-D-ribopyranose = beta-D-ribofuranose. The protein operates within carbohydrate metabolism; D-ribose degradation; D-ribose 5-phosphate from beta-D-ribopyranose: step 1/2. Functionally, catalyzes the interconversion of beta-pyran and beta-furan forms of D-ribose. This is D-ribose pyranase from Escherichia coli (strain 55989 / EAEC).